A 365-amino-acid chain; its full sequence is Phospho-N-acetylmuramoyl-pentapeptide-transferase (365 aa).

Transmembrane regions (helical) follow at residues 22 to 42 (YISV…LALG), 74 to 94 (TMGG…WGDL), 95 to 115 (TSIY…IGFF), 134 to 154 (KFAL…YLLS), 168 to 188 (SLYI…IING), 201 to 221 (GLAI…AYIE), 240 to 260 (LAEV…FLWF), 267 to 287 (VFMG…IAVM), 292 to 312 (LIFF…MLQV), and 342 to 362 (KVVI…LAAI).

Belongs to the glycosyltransferase 4 family. MraY subfamily. Mg(2+) is required as a cofactor.

It is found in the cell inner membrane. The enzyme catalyses UDP-N-acetyl-alpha-D-muramoyl-L-alanyl-gamma-D-glutamyl-meso-2,6-diaminopimeloyl-D-alanyl-D-alanine + di-trans,octa-cis-undecaprenyl phosphate = di-trans,octa-cis-undecaprenyl diphospho-N-acetyl-alpha-D-muramoyl-L-alanyl-D-glutamyl-meso-2,6-diaminopimeloyl-D-alanyl-D-alanine + UMP. It participates in cell wall biogenesis; peptidoglycan biosynthesis. In terms of biological role, catalyzes the initial step of the lipid cycle reactions in the biosynthesis of the cell wall peptidoglycan: transfers peptidoglycan precursor phospho-MurNAc-pentapeptide from UDP-MurNAc-pentapeptide onto the lipid carrier undecaprenyl phosphate, yielding undecaprenyl-pyrophosphoryl-MurNAc-pentapeptide, known as lipid I. In Francisella tularensis subsp. mediasiatica (strain FSC147), this protein is Phospho-N-acetylmuramoyl-pentapeptide-transferase.